The following is a 274-amino-acid chain: 3-methyl-2-oxobutanoate hydroxymethyltransferase (274 aa).

2 residues coordinate Mg(2+): Asp-49 and Asp-88. 3-methyl-2-oxobutanoate is bound by residues 49–50, Asp-88, and Lys-118; that span reads DS. Mg(2+) is bound at residue Glu-120. Glu-187 serves as the catalytic Proton acceptor.

This sequence belongs to the PanB family. As to quaternary structure, homodecamer; pentamer of dimers. Mg(2+) is required as a cofactor.

The protein resides in the cytoplasm. It catalyses the reaction 3-methyl-2-oxobutanoate + (6R)-5,10-methylene-5,6,7,8-tetrahydrofolate + H2O = 2-dehydropantoate + (6S)-5,6,7,8-tetrahydrofolate. The protein operates within cofactor biosynthesis; (R)-pantothenate biosynthesis; (R)-pantoate from 3-methyl-2-oxobutanoate: step 1/2. In terms of biological role, catalyzes the reversible reaction in which hydroxymethyl group from 5,10-methylenetetrahydrofolate is transferred onto alpha-ketoisovalerate to form ketopantoate. This Paramagnetospirillum magneticum (strain ATCC 700264 / AMB-1) (Magnetospirillum magneticum) protein is 3-methyl-2-oxobutanoate hydroxymethyltransferase.